Here is a 158-residue protein sequence, read N- to C-terminus: 2-C-methyl-D-erythritol 2,4-cyclodiphosphate synthase (158 aa).

A divalent metal cation-binding residues include Asp-9 and His-11. 4-CDP-2-C-methyl-D-erythritol 2-phosphate-binding positions include 9 to 11 (DVH) and 35 to 36 (HS). His-43 contributes to the a divalent metal cation binding site. 4-CDP-2-C-methyl-D-erythritol 2-phosphate is bound by residues 57-59 (DIG), 62-66 (FPDTD), 101-107 (AQRPKMA), 133-136 (TTTE), Phe-140, and Arg-143.

It belongs to the IspF family. In terms of assembly, homotrimer. A divalent metal cation serves as cofactor.

It catalyses the reaction 4-CDP-2-C-methyl-D-erythritol 2-phosphate = 2-C-methyl-D-erythritol 2,4-cyclic diphosphate + CMP. It functions in the pathway isoprenoid biosynthesis; isopentenyl diphosphate biosynthesis via DXP pathway; isopentenyl diphosphate from 1-deoxy-D-xylulose 5-phosphate: step 4/6. Its function is as follows. Involved in the biosynthesis of isopentenyl diphosphate (IPP) and dimethylallyl diphosphate (DMAPP), two major building blocks of isoprenoid compounds. Catalyzes the conversion of 4-diphosphocytidyl-2-C-methyl-D-erythritol 2-phosphate (CDP-ME2P) to 2-C-methyl-D-erythritol 2,4-cyclodiphosphate (ME-CPP) with a corresponding release of cytidine 5-monophosphate (CMP). This Lysinibacillus sphaericus (strain C3-41) protein is 2-C-methyl-D-erythritol 2,4-cyclodiphosphate synthase.